The following is a 734-amino-acid chain: Serine protease FAM111B (734 aa).

Residue methionine 1 is modified to N-acetylmethionine. 2 stretches are compositionally biased toward basic and acidic residues: residues 1–10 and 17–32; these read MNSMKTEENK and DDQR…TVMK. Residues 1 to 32 form a disordered region; that stretch reads MNSMKTEENKSFSAMEDDQRTRPEVSKDTVMK. Lysine 284 is covalently cross-linked (Glycyl lysine isopeptide (Lys-Gly) (interchain with G-Cter in SUMO2)). The interval 285–321 is disordered; it reads QNESATDEINHQSLIQSKKKVHKPKKDGETKDVEHSR. The span at 310–321 shows a compositional bias: basic and acidic residues; sequence KDGETKDVEHSR. Catalysis depends on charge relay system residues histidine 490, aspartate 544, and serine 650. The segment at 712–734 is disordered; that stretch reads TYDEEKGKQESSLQDHQIEPMEC.

This sequence belongs to the FAM111 family. Widely expressed.

Serine protease. The protein is Serine protease FAM111B of Homo sapiens (Human).